We begin with the raw amino-acid sequence, 384 residues long: Gastrin-releasing peptide receptor (384 aa).

At 1–39 (MDPNNCSHLNLEVDPFLSCNNTFNQTLNPPKMDNWFHPG) the chain is on the extracellular side. N5, N20, and N24 each carry an N-linked (GlcNAc...) asparagine glycan. The helical transmembrane segment at 40–63 (IIYVIPAVYGLIIVIGLIGNITLI) threads the bilayer. Residues 64 to 77 (KIFCTVKSMRNVPN) are Cytoplasmic-facing. A helical membrane pass occupies residues 78 to 97 (LFISSLALGDLLLLVTCAPV). The Extracellular portion of the chain corresponds to 98–115 (DASKYLADRWLFGRIGCK). A disulfide bridge links C114 with C197. A helical transmembrane segment spans residues 116 to 137 (LIPFIQLTSVGVSVFTLTALSA). At 138-153 (DRYKAIVRPMDIQASH) the chain is on the cytoplasmic side. The helical transmembrane segment at 154 to 175 (ALMKICLKAALIWIVSMLLAIP) threads the bilayer. The Extracellular portion of the chain corresponds to 176–209 (EAVFSDLHPFHVKDTNQTFISCAPYPHSNELHPK). Residues 210–235 (IHSMASFLVFYIIPLSIISVYYYFIA) traverse the membrane as a helical segment. At 236–265 (RNLIQSAYNLPVEGNIHVKKQIESRKRLAK) the chain is on the cytoplasmic side. Residues 266–286 (TVLVFVGLFAFCWLPNHVIYL) form a helical membrane-spanning segment. Topologically, residues 287 to 299 (YRSYHYSEVDTSM) are extracellular. The helical transmembrane segment at 300–326 (LHFITSICARLLAFTNSCVNPFALYLL) threads the bilayer. The Cytoplasmic portion of the chain corresponds to 327-384 (SKSFRKQFNTQLLCCQPSLLNRSHSTGRSTTCMTSFKSTNPSATFSLINGNICHEGYV). Residue C340 is the site of S-palmitoyl cysteine attachment. Position 351 is a phosphoserine (S351).

It belongs to the G-protein coupled receptor 1 family. In terms of tissue distribution, expressed in the hippocampal CA1 region (at protein level).

It localises to the cell membrane. Its function is as follows. Receptor for gastrin-releasing peptide (GRP). Signals via association with G proteins that activate a phosphatidylinositol-calcium second messenger system, resulting in Akt phosphorylation. Contributes to the regulation of food intake. Contributes to the perception of prurient stimuli and transmission of itch signals in the spinal cord that promote scratching behavior, but does not play a role in the perception of pain. Contributes primarily to nonhistaminergic itch sensation. In one study, shown to act in the amygdala as part of an inhibitory network which inhibits memory specifically related to learned fear. In another study, shown to contribute to disinhibition of glutamatergic cells in the auditory cortex via signaling on vasoactive intestinal peptide-expressing cells which leads to enhanced auditory fear memories. Contributes to the induction of sighing through signaling in the pre-Botzinger complex, a cluster of several thousand neurons in the ventrolateral medulla responsible for inspiration during respiratory activity. The chain is Gastrin-releasing peptide receptor (Grpr) from Rattus norvegicus (Rat).